The following is a 59-amino-acid chain: Small ribosomal subunit protein eS17 (59 aa).

This sequence belongs to the eukaryotic ribosomal protein eS17 family.

The polypeptide is Small ribosomal subunit protein eS17 (Halobacterium salinarum (strain ATCC 29341 / DSM 671 / R1)).